A 177-amino-acid polypeptide reads, in one-letter code: Dual-action ribosomal maturation protein DarP (177 aa).

Over residues 1 to 12 (MKIVGDSEHFKQ) the composition is skewed to basic and acidic residues. The segment at 1-26 (MKIVGDSEHFKQPYDSNDEYVSKTED) is disordered.

This sequence belongs to the DarP family.

The protein localises to the cytoplasm. In terms of biological role, member of a network of 50S ribosomal subunit biogenesis factors which assembles along the 30S-50S interface, preventing incorrect 23S rRNA structures from forming. Promotes peptidyl transferase center (PTC) maturation. The sequence is that of Dual-action ribosomal maturation protein DarP from Shewanella oneidensis (strain ATCC 700550 / JCM 31522 / CIP 106686 / LMG 19005 / NCIMB 14063 / MR-1).